The chain runs to 685 residues: Stromal interaction molecule 1 (685 aa).

The first 22 residues, 1–22 (MDVCARLALWLLWGLLLHQGQS), serve as a signal peptide directing secretion. Topologically, residues 23 to 213 (LSHSHSEKNT…LLTRHNHLKD (191 aa)) are extracellular. The interval 24–43 (SHSHSEKNTGASSGATSEES) is disordered. Residues 32–41 (TGASSGATSE) show a composition bias toward low complexity. 2 EF-hand domains span residues 64 to 97 (SFEA…EDLN) and 102 to 126 (TVKH…AWKS). Ca(2+) is bound by residues Asp76, Asp78, Asn80, Asp82, and Glu87. Asn131 and Asn171 each carry an N-linked (GlcNAc...) asparagine glycan. Residues 132–200 (WTVDEVIQWL…QLKALDTVLF (69 aa)) enclose the SAM domain. Residues 214–234 (FMLVVSIVIGVGGCWFAYIQN) traverse the membrane as a helical segment. Residues 235 to 685 (RYSKEHMKKM…LKIFKKPLKK (451 aa)) lie on the Cytoplasmic side of the membrane. The stretch at 248–442 (LEGLHRAEQS…IEILCGFQIV (195 aa)) forms a coiled coil. A Phosphoserine modification is found at Ser257. The tract at residues 344-442 (PEALQKWLQL…IEILCGFQIV (99 aa)) is SOAR/CAD. Residues 475–483 (DDVDDMDEE) form a contributes to fast Ca(2+)-dependent inactivation of CRAC channels region. Low complexity predominate over residues 490 to 499 (MQSPSLQSSV). The tract at residues 490 to 541 (MQSPSLQSSVRQRLTEPQLGLGSQRDLTHSDSESSLHMSDRQRVAPKPPQMG) is disordered. Thr504 is subject to Phosphothreonine. Position 512 is a phosphoserine (Ser512). The segment covering 515 to 532 (DLTHSDSESSLHMSDRQR) has biased composition (basic and acidic residues). Thr517 bears the Phosphothreonine mark. A phosphoserine mark is found at Ser519, Ser521, Ser523, Ser524, Ser567, Ser575, Ser602, Ser608, Ser618, Ser621, and Ser628. The tract at residues 596–685 (LMELNPSVPP…LKIFKKPLKK (90 aa)) is disordered. Over residues 608-620 (SPLLDSSHSLSPS) the composition is skewed to low complexity. Positions 642-645 (TRIP) match the Microtubule tip localization signal motif. A compositionally biased stretch (acidic residues) spans 655-666 (EEDNGSIGEETD). Residue Ser660 is modified to Phosphoserine. A Phosphothreonine modification is found at Thr665. The residue at position 668 (Ser668) is a Phosphoserine. Residues 670-685 (GRKKFPLKIFKKPLKK) are compositionally biased toward basic residues. The tract at residues 672–685 (KKFPLKIFKKPLKK) is required for generation of inwardly rectifying CRAC currents.

As to quaternary structure, monomer in the presence of Ca(2+). It oligomerizes in absence of Ca(2+). Forms homooligomers and heterooligomers with STIM2. Interacts with pore-forming subunits of CRAC channels, ORAI1, ORAI2 and ORAI3; this interaction is potentiated upon Ca(2+) store depletion. Interacts (via the transmembrane region and the SOAR/CAD domain) with SPPL3; the interaction promotes the binding of STIM1 to ORAI1. Interacts with ORAI1. Interacts with MAPRE1; probably required for targeting to the growing microtubule plus ends. Interacts with CRACR2A/EFCAB4B; the interaction is direct and takes place in absence of Ca(2+). Forms a complex with CRACR2A/EFCAB4B and ORAI1 at low concentration of Ca(2+), the complex dissociates at elevated Ca(2+) concentrations. Interacts with SARAF, promoting a slow inactivation of STIM1-dependent SOCE activity, possibly by facilitating the deoligomerization of STIM1. Interacts with EFHB; the interaction takes place upon Ca(2+)-store depletion and inhibits the association with SARAF. Interacts with ASPH. Interacts with SLC35G1; intracellular Ca(2+)-dependent. May interact with ATP1A1, ATP2A2, ATP2B1, ATP2B4, KPNB1 and XPO1; through SLC35G1. Interacts with STIMATE, promoting STIM1 conformational switch. Interacts with TMEM178A. Interacts with CASQ1 (via C-terminal end and preferentially with the monomeric form); this interaction increases in response to a depletion of intracellular Ca(2+), decreases both STIM1 aggregation and clustering, interaction of STIM1 with ORAI1 and store-operated Ca(2+) entry (SOCE) activity. Interacts with ADCY8. Interacts with TMEM203. In terms of processing, glycosylation is required for cell surface expression. Post-translationally, phosphorylated predominantly on Ser residues. Expressed in maturation-stage ameloblasts (at protein level). Expressed in all tissues examined and in many cell types, including bone marrow stroma, fibroblast, B-cell precursors, lymphoma and erythroleukemia.

The protein localises to the cell membrane. Its subcellular location is the endoplasmic reticulum membrane. The protein resides in the sarcoplasmic reticulum. It localises to the cytoplasm. It is found in the cytoskeleton. Functionally, acts as a Ca(2+) sensor that gates two major inward rectifying Ca(2+) channels at the plasma membrane: Ca(2+) release-activated Ca(2+) (CRAC) channels and arachidonate-regulated Ca(2+)-selective (ARC) channels. Plays a role in mediating store-operated Ca(2+) entry (SOCE), a Ca(2+) influx following depletion of intracellular Ca(2+) stores. Upon Ca(2+) depletion, translocates from the endoplasmic reticulum to the plasma membrane where it activates CRAC channel pore-forming subunits ORA1, ORA2 and ORAI3 to generate sustained and oscillatory Ca(2+) entry. Involved in enamel formation. The protein is Stromal interaction molecule 1 (Stim1) of Mus musculus (Mouse).